The following is a 2057-amino-acid chain: Myosin heavy chain, non-muscle (2057 aa).

The Myosin N-terminal SH3-like domain maps to 78–128; that stretch reads HRSVLVWVPHENQGFVAASIKREHGDEVEVELAETGKRVMILRDDIQKMNP. The region spanning 132–867 is the Myosin motor domain; that stretch reads DKVEDMAELT…VLAHLEEERD (736 aa). 225 to 232 serves as a coordination point for ATP; sequence GESGAGKT. The tract at residues 250–260 is 25 kDa/50 kDa junction; that stretch reads PKGSGAVPHPA. Residues 722 to 734 are 50 kDa/20 kDa junction; that stretch reads DTQFGARTRKGMF. Residues 745-767 form an actin-binding region; the sequence is LAKLMDTLRNTNPNFVRCIIPNH. Residues 782 to 798 are reactive sulfhydryl/actin-binding; sequence QLRCNGVLEGIRICRQG. The 30-residue stretch at 870-899 folds into the IQ domain; the sequence is ISDLIVNFQAFCRGFLARRNYQKRLQQLNA. A coiled-coil region spans residues 926 to 2016; the sequence is KPLLEVTKQE…SLKTKLRRTG (1091 aa). 3 disordered regions span residues 1124–1144, 1782–1802, and 2008–2057; these read EERL…KRKI, SSER…EEIA, and LKTK…DSAN. Residues 1343–2010 are alpha-helical tailpiece (LMM); the sequence is SQIAELQVKL…MNREINSLKT (668 aa). The interval 1343–2057 is light meromyosin (LMM); sequence SQIAELQVKL…ESLDGEDSAN (715 aa). Positions 1782-1792 are enriched in basic and acidic residues; sequence SSERARRAAET. The interval 2011 to 2057 is globular tailpiece; that stretch reads KLRRTGGIGLSSSRLTGTPSSKRAGGGGGSDDSSVQDESLDGEDSAN. 2 positions are modified to phosphoserine: Ser2021 and Ser2022. A compositionally biased stretch (acidic residues) spans 2044–2057; that stretch reads SVQDESLDGEDSAN.

The protein belongs to the TRAFAC class myosin-kinesin ATPase superfamily. Myosin family. Interacts with sau. Interacts with ck and Ubr3. Ubiquitinated. In Johnston's organ, expressed in neurons and scolopale cells.

Its subcellular location is the cell projection. It localises to the cilium. The protein localises to the cytoplasm. In terms of biological role, nonmuscle myosin appears to be responsible for cellularization. Required for morphogenesis and cytokinesis. Necessary for auditory transduction: plays a role in Johnston's organ organization by acting in scolopidial apical attachment. Interaction with the myosin ck may be important for this function. Localizes to and defines the trailing edge of cells during larval epidermal wound healing. This process is dependent on the phosphatidylinositol 4-phosphate 5-kinase sktl/skittles. The chain is Myosin heavy chain, non-muscle (zip) from Drosophila melanogaster (Fruit fly).